The primary structure comprises 167 residues: Urease accessory protein UreE (167 aa).

The segment at 137-158 is disordered; sequence EAGAYQSAPHGHSHSHAHGHDH.

This sequence belongs to the UreE family.

Its subcellular location is the cytoplasm. In terms of biological role, involved in urease metallocenter assembly. Binds nickel. Probably functions as a nickel donor during metallocenter assembly. This Pseudomonas putida (strain ATCC 700007 / DSM 6899 / JCM 31910 / BCRC 17059 / LMG 24140 / F1) protein is Urease accessory protein UreE.